Consider the following 72-residue polypeptide: Small ribosomal subunit protein bS18 (72 aa).

Belongs to the bacterial ribosomal protein bS18 family. In terms of assembly, part of the 30S ribosomal subunit. Forms a tight heterodimer with protein bS6.

Binds as a heterodimer with protein bS6 to the central domain of the 16S rRNA, where it helps stabilize the platform of the 30S subunit. This chain is Small ribosomal subunit protein bS18, found in Aquifex aeolicus (strain VF5).